A 211-amino-acid polypeptide reads, in one-letter code: Large ribosomal subunit protein uL4 (211 aa).

Residues 40-87 (QQAHTRQGTASTLTRSEVRGGGRKPYKQKGTGRARQGSIRTPLRPGGG) are disordered. Over residues 41 to 54 (QAHTRQGTASTLTR) the composition is skewed to polar residues. The segment covering 60-71 (GGRKPYKQKGTG) has biased composition (basic residues).

The protein belongs to the universal ribosomal protein uL4 family. Part of the 50S ribosomal subunit.

One of the primary rRNA binding proteins, this protein initially binds near the 5'-end of the 23S rRNA. It is important during the early stages of 50S assembly. It makes multiple contacts with different domains of the 23S rRNA in the assembled 50S subunit and ribosome. In terms of biological role, forms part of the polypeptide exit tunnel. The sequence is that of Large ribosomal subunit protein uL4 from Synechococcus sp. (strain WH7803).